A 307-amino-acid polypeptide reads, in one-letter code: Auxin-induced protein PCNT115 (307 aa).

Residue tyrosine 64 is the Proton donor of the active site. Histidine 136 serves as a coordination point for substrate. 215 to 225 (SPLGRGFLSSG) is an NADP(+) binding site.

Belongs to the aldo/keto reductase family. Aldo/keto reductase 2 subfamily.

The polypeptide is Auxin-induced protein PCNT115 (Nicotiana tabacum (Common tobacco)).